The following is a 384-amino-acid chain: MAP kinase-activated protein kinase 3 (384 aa).

Residue methionine 1 is modified to N-acetylmethionine. The segment at 1–33 (MDGETAGEKGSLVPPPGALGGSALGGAPAPGVR) is disordered. In terms of domain architecture, Protein kinase spans 46–306 (QLSKQVLGLG…IMQFMNHPWI (261 aa)). ATP is bound by residues 52-60 (LGLGVNGKV) and lysine 75. The active-site Proton acceptor is the aspartate 168. Position 203 is a phosphothreonine; by MAPK14 (threonine 203). Serine 253 is modified (phosphoserine; by MAPK14). Residue serine 309 is modified to Phosphoserine; by autocatalysis. Positions 309–345 (SMVVPQTPLYTARVLQEDKDHWDDVKEEMTSALATMR) are autoinhibitory helix. Position 315 is a phosphothreonine; by MAPK14 (threonine 315). The Nuclear export signal (NES) motif lies at 337 to 346 (MTSALATMRV). The interval 347 to 371 (DYDQVKIKDLKTSNNRLLNKRRKKQ) is p38 MAPK-binding site. 2 consecutive short sequence motifs (bipartite nuclear localization signal) follow at residues 352 to 355 (KIKD) and 366 to 370 (KRRKK). Positions 359 to 384 (SNNRLLNKRRKKQAGSSSASQGCNNQ) are disordered. Residues 372–384 (AGSSSASQGCNNQ) are compositionally biased toward polar residues.

This sequence belongs to the protein kinase superfamily. CAMK Ser/Thr protein kinase family. Heterodimer with p38-alpha/MAPK14. The heterodimer with p38-alpha/MAPK14 forms a stable complex: molecules are positioned 'face to face' so that the ATP-binding sites of both kinases are at the heterodimer interface. Interacts with TCF3 and with polycomb proteins, such as PCH2 and BMI1/PCGF4. Post-translationally, phosphorylated and activated by MAPK1/ERK2 and MAPK3/ERK1. Phosphorylated and activated by MAP kinase p38-alpha/MAPK14 at Thr-201, Ser-251 and Thr-313. Isoform 3 is degraded following phosphorylation at Thr-203. In terms of tissue distribution, ubiquitously expressed (at protein level). Isoform 3 is expressed in skeletal muscles and heart.

Its subcellular location is the nucleus. It is found in the cytoplasm. It carries out the reaction L-seryl-[protein] + ATP = O-phospho-L-seryl-[protein] + ADP + H(+). The enzyme catalyses L-threonyl-[protein] + ATP = O-phospho-L-threonyl-[protein] + ADP + H(+). Its activity is regulated as follows. Activated following phosphorylation by p38-alpha/MAPK14 following various stresses. Inhibited by ligand 5B (2'-[2-(1,3-benzodioxol-5-yl)pyrimidin-4-yl]-5',6'-dihydrospiro[piperidine-4,7'-pyrrolo[3,2-c]pyridin]- 4'(1'h)-one) and ligand P4O (2-[2-(2-fluorophenyl)pyridin-4-yl]-1,5,6,7-tetrahydro- 4h-pyrrolo[3,2-c]pyridin-4-one), 2 ATP-competitive inhibitors. Its function is as follows. Stress-activated serine/threonine-protein kinase involved in cytokines production, endocytosis, cell migration, chromatin remodeling and transcriptional regulation. Following stress, it is phosphorylated and activated by MAP kinase p38-alpha/MAPK14, leading to phosphorylation of substrates. Phosphorylates serine in the peptide sequence, Hyd-X-R-X(2)-S, where Hyd is a large hydrophobic residue. MAPKAPK2 and MAPKAPK3, share the same function and substrate specificity, but MAPKAPK3 kinase activity and level in protein expression are lower compared to MAPKAPK2. Phosphorylates HSP27/HSPB1, KRT18, KRT20, RCSD1, RPS6KA3, TAB3 and TTP/ZFP36. Mediates phosphorylation of HSP27/HSPB1 in response to stress, leading to dissociate HSP27/HSPB1 from large small heat-shock protein (sHsps) oligomers and impair their chaperone activities and ability to protect against oxidative stress effectively. Involved in inflammatory response by regulating tumor necrosis factor (TNF) and IL6 production post-transcriptionally: acts by phosphorylating AU-rich elements (AREs)-binding proteins, such as TTP/ZFP36, leading to regulate the stability and translation of TNF and IL6 mRNAs. Phosphorylation of TTP/ZFP36, a major post-transcriptional regulator of TNF, promotes its binding to 14-3-3 proteins and reduces its ARE mRNA affinity leading to inhibition of dependent degradation of ARE-containing transcript. Involved in toll-like receptor signaling pathway (TLR) in dendritic cells: required for acute TLR-induced macropinocytosis by phosphorylating and activating RPS6KA3. Also acts as a modulator of Polycomb-mediated repression. The polypeptide is MAP kinase-activated protein kinase 3 (Mapkapk3) (Mus musculus (Mouse)).